The primary structure comprises 130 residues: Metastasis-suppressor KiSS-1 (130 aa).

Positions 1–19 (MISLASWQLLLLLCVASFG) are cleaved as a signal peptide. The segment at 52-91 (RYAESKPGAAGLRARRTSPCPPVENPTGHQRPPCATRSRL) is disordered. A disulfide bridge connects residues Cys-71 and Cys-85. Tyr-110 is modified (phosphotyrosine). Positions 110–119 (YNWNSFGLRY) are essential for receptor binding and receptor activation. Tyr-119 bears the Tyrosine amide mark.

It belongs to the KISS1 family. In terms of tissue distribution, highest levels in the cecum and colon. Moderate levels present in the liver, spleen, kidney, ovary, uterus and small intestine. Low levels in the stomach, pancreas and placenta. Expressed only moderately in the placenta. Persistent expression is detected in hypothalamus throughout postnatal development, with maximum expression levels at puberty in both male and female. Hypothalamic expression is sensitive to neonatal imprinting by estrogen. Expression is higher in the hypothalamus than in the brainstem and spinal cord. In the brain, metastin-like immunoreactivity is found mainly in three groups of cells: dorsomedial hypothalamic nucleus, nucleus of the solitary tract, and caudal ventrolateral medulla.

The protein resides in the secreted. Metastasis suppressor protein. May regulate events downstream of cell-matrix adhesion, perhaps involving cytoskeletal reorganization. Generates a C-terminally amidated peptide, metastin which functions as the endogenous ligand of the G-protein coupled receptor GPR54. The receptor is also essential for normal gonadotropin-released hormone physiology and for puberty. The hypothalamic KiSS1/GPR54 system is a pivotal factor in central regulation of the gonadotropic axis at puberty and in adulthood. Intracerebroventricular administration induces an increase in serum LH and FSH levels in prepubertal male and female as well as in adult animals. This is Metastasis-suppressor KiSS-1 (Kiss1) from Rattus norvegicus (Rat).